Consider the following 445-residue polypeptide: Xylose isomerase (445 aa).

Residues histidine 107 and aspartate 110 contribute to the active site. 7 residues coordinate Mg(2+): glutamate 238, glutamate 274, histidine 277, aspartate 302, aspartate 313, aspartate 315, and aspartate 345.

This sequence belongs to the xylose isomerase family. In terms of assembly, homotetramer. The cofactor is Mg(2+).

It localises to the cytoplasm. It carries out the reaction alpha-D-xylose = alpha-D-xylulofuranose. In Bacillus cereus (strain ATCC 10987 / NRS 248), this protein is Xylose isomerase.